The following is a 421-amino-acid chain: uncharacterized protein (421 aa).

This sequence belongs to the glycosyltransferase 28 family.

This is an uncharacterized protein from Mycobacterium leprae (strain TN).